Here is a 45-residue protein sequence, read N- to C-terminus: Photosystem II reaction center protein K (45 aa).

Residues 1 to 8 (MEAVLLLA) constitute a propeptide that is removed on maturation. A helical transmembrane segment spans residues 24-44 (MPVIPLFFLALAFVWQAAVGF).

This sequence belongs to the PsbK family. As to quaternary structure, PSII is composed of 1 copy each of membrane proteins PsbA, PsbB, PsbC, PsbD, PsbE, PsbF, PsbH, PsbI, PsbJ, PsbK, PsbL, PsbM, PsbT, PsbX, PsbY, PsbZ, Psb30/Ycf12, peripheral proteins PsbO, CyanoQ (PsbQ), PsbU, PsbV and a large number of cofactors. It forms dimeric complexes.

Its subcellular location is the cellular thylakoid membrane. In terms of biological role, one of the components of the core complex of photosystem II (PSII). PSII is a light-driven water:plastoquinone oxidoreductase that uses light energy to abstract electrons from H(2)O, generating O(2) and a proton gradient subsequently used for ATP formation. It consists of a core antenna complex that captures photons, and an electron transfer chain that converts photonic excitation into a charge separation. The sequence is that of Photosystem II reaction center protein K from Acaryochloris marina (strain MBIC 11017).